We begin with the raw amino-acid sequence, 1342 residues long: DNA-directed RNA polymerase subunit beta (1342 aa).

Lysine 1022 and lysine 1200 each carry N6-acetyllysine.

This sequence belongs to the RNA polymerase beta chain family. In terms of assembly, the RNAP catalytic core consists of 2 alpha, 1 beta, 1 beta' and 1 omega subunit. When a sigma factor is associated with the core the holoenzyme is formed, which can initiate transcription.

The enzyme catalyses RNA(n) + a ribonucleoside 5'-triphosphate = RNA(n+1) + diphosphate. Functionally, DNA-dependent RNA polymerase catalyzes the transcription of DNA into RNA using the four ribonucleoside triphosphates as substrates. This Shigella dysenteriae serotype 1 (strain Sd197) protein is DNA-directed RNA polymerase subunit beta.